The primary structure comprises 503 residues: Cytochrome P450 3A7 (503 aa).

Cys442 is a heme binding site.

This sequence belongs to the cytochrome P450 family. The cofactor is heme. In terms of tissue distribution, expressed in fetal liver (at protein level).

It is found in the endoplasmic reticulum membrane. The protein resides in the microsome membrane. It carries out the reaction an organic molecule + reduced [NADPH--hemoprotein reductase] + O2 = an alcohol + oxidized [NADPH--hemoprotein reductase] + H2O + H(+). It catalyses the reaction 3beta-hydroxyandrost-5-en-17-one + reduced [NADPH--hemoprotein reductase] + O2 = 3beta,16alpha-dihydroxy-androst-5-en-17-one + oxidized [NADPH--hemoprotein reductase] + H2O + H(+). The enzyme catalyses dehydroepiandrosterone 3-sulfate + reduced [NADPH--hemoprotein reductase] + O2 = 16alpha-hydroxydehydroepiandrosterone 3-sulfate + oxidized [NADPH--hemoprotein reductase] + H2O + H(+). The catalysed reaction is testosterone + reduced [NADPH--hemoprotein reductase] + O2 = 6beta,17beta-dihydroxyandrost-4-en-3-one + oxidized [NADPH--hemoprotein reductase] + H2O + H(+). It carries out the reaction estrone + reduced [NADPH--hemoprotein reductase] + O2 = 2-hydroxyestrone + oxidized [NADPH--hemoprotein reductase] + H2O + H(+). It catalyses the reaction estrone + reduced [NADPH--hemoprotein reductase] + O2 = 4-hydroxyestrone + oxidized [NADPH--hemoprotein reductase] + H2O + H(+). The enzyme catalyses estrone + reduced [NADPH--hemoprotein reductase] + O2 = 16alpha-hydroxyestrone + oxidized [NADPH--hemoprotein reductase] + H2O + H(+). The catalysed reaction is 17beta-estradiol + reduced [NADPH--hemoprotein reductase] + O2 = 2-hydroxy-17beta-estradiol + oxidized [NADPH--hemoprotein reductase] + H2O + H(+). It carries out the reaction 17beta-estradiol + reduced [NADPH--hemoprotein reductase] + O2 = 6beta-hydroxyestradiol-17beta + oxidized [NADPH--hemoprotein reductase] + H2O + H(+). It catalyses the reaction all-trans-retinoate + reduced [NADPH--hemoprotein reductase] + O2 = all-trans-4-hydroxyretinoate + oxidized [NADPH--hemoprotein reductase] + H2O + H(+). The enzyme catalyses all-trans-retinoate + reduced [NADPH--hemoprotein reductase] + O2 = all-trans-18-hydroxyretinoate + oxidized [NADPH--hemoprotein reductase] + H2O + H(+). Its pathway is steroid hormone biosynthesis. It functions in the pathway cofactor metabolism; retinol metabolism. Functionally, a cytochrome P450 monooxygenase involved in the metabolism of steroid hormones and vitamins during embryogenesis. Mechanistically, uses molecular oxygen inserting one oxygen atom into a substrate, and reducing the second into a water molecule, with two electrons provided by NADPH via cytochrome P450 reductase (NADPH--hemoprotein reductase). Catalyzes the hydroxylation of carbon-hydrogen bonds. Metabolizes 3beta-hydroxyandrost-5-en-17-one (dehydroepiandrosterone, DHEA), a precursor in the biosynthesis of androgen and estrogen steroid hormones. Exhibits high catalytic activity for the formation of hydroxyestrogens from estrone (E1), particularly D-ring hydroxylated estrone at the C16-alpha position. Mainly hydroxylates all trans-retinoic acid (atRA) to 4-hydroxyretinoate and may play a role in atRA clearance during fetal development. Also involved in the oxidative metabolism of xenobiotics including anticonvulsants. This chain is Cytochrome P450 3A7, found in Homo sapiens (Human).